The sequence spans 109 residues: Envelope small membrane protein (109 aa).

At 1–11 (MTNLLNKSLEE) the chain is on the virion surface side. A helical transmembrane segment spans residues 12 to 32 (NGSFLTAVYIFVGFVALYLLG). Residues 33 to 109 (RALQAFVQAA…QDVQRNKLYS (77 aa)) lie on the Intravirion side of the membrane. The interval 89–109 (NGWNNKNPANFQDVQRNKLYS) is disordered. The segment covering 90 to 109 (GWNNKNPANFQDVQRNKLYS) has biased composition (polar residues).

It belongs to the gammacoronaviruses E protein family. As to quaternary structure, homooligomer. Interacts with the M membrane protein in the budding compartment of the host cell, which is located between endoplasmic reticulum and the Golgi complex. The cytoplasmic tails of both proteins are important for this function. Interacts with Nucleoprotein.

It localises to the host Golgi apparatus membrane. In terms of biological role, plays a central role in virus morphogenesis and assembly. Acts as a viroporin and self-assembles in host membranes forming pentameric protein-lipid pores that allow ion transport. Also plays a role in the induction of apoptosis. This chain is Envelope small membrane protein, found in Avian infectious bronchitis virus (strain KB8523) (IBV).